The following is a 96-amino-acid chain: uncharacterized protein (96 aa).

Transmembrane regions (helical) follow at residues 3–23 (KLTI…QLFA), 30–50 (TLGN…LASI), and 68–88 (IGLL…IIII).

It is found in the cell membrane. This is an uncharacterized protein from Bacillus subtilis (strain 168).